The primary structure comprises 125 residues: uncharacterized protein (125 aa).

A Cupin type-2 domain is found at 45–110 (IVPVGSKTLL…IGNVPLKILC (66 aa)).

This is an uncharacterized protein from Methanocaldococcus jannaschii (strain ATCC 43067 / DSM 2661 / JAL-1 / JCM 10045 / NBRC 100440) (Methanococcus jannaschii).